The chain runs to 297 residues: HTH-type transcriptional regulator ArgP (297 aa).

The 57-residue stretch at 4 to 60 (PDYRTLQALDAVIRERGFERAAQKLCITQSAVSQRIKQLENMFGQPLLVRTVPPRPT) folds into the HTH lysR-type domain. A DNA-binding region (H-T-H motif) is located at residues 21-40 (FERAAQKLCITQSAVSQRIK).

Belongs to the LysR transcriptional regulatory family. As to quaternary structure, homodimer.

In terms of biological role, controls the transcription of genes involved in arginine and lysine metabolism. This is HTH-type transcriptional regulator ArgP from Escherichia coli O127:H6 (strain E2348/69 / EPEC).